The following is a 287-amino-acid chain: Ribosomal RNA small subunit methyltransferase A (287 aa).

S-adenosyl-L-methionine-binding residues include N28, L30, G55, E77, D103, and N123.

This sequence belongs to the class I-like SAM-binding methyltransferase superfamily. rRNA adenine N(6)-methyltransferase family. RsmA subfamily.

Its subcellular location is the cytoplasm. It catalyses the reaction adenosine(1518)/adenosine(1519) in 16S rRNA + 4 S-adenosyl-L-methionine = N(6)-dimethyladenosine(1518)/N(6)-dimethyladenosine(1519) in 16S rRNA + 4 S-adenosyl-L-homocysteine + 4 H(+). Specifically dimethylates two adjacent adenosines (A1518 and A1519) in the loop of a conserved hairpin near the 3'-end of 16S rRNA in the 30S particle. May play a critical role in biogenesis of 30S subunits. This is Ribosomal RNA small subunit methyltransferase A from Rhodopseudomonas palustris (strain BisB5).